The following is a 493-amino-acid chain: Homeobox protein abdominal-B (493 aa).

Residues 1–29 (MQQHHLQQQQQQQQQQEQQHLQEQQQHLQ) are compositionally biased toward low complexity. 3 disordered regions span residues 1–199 (MQQH…APGQ), 322–360 (AAAR…SSGA), and 438–475 (RRMK…HHSG). The span at 30–39 (QLHHHAHHHL) shows a compositional bias: basic residues. Low complexity-rich tracts occupy residues 54–95 (PHLQ…THAV) and 105–134 (LVAV…QQLA). Positions 144 to 153 (PAQTPTGPSA) are enriched in polar residues. Residues 154-173 (QQQQHLTSPHHQQLPQQQTP) are compositionally biased toward low complexity. Positions 174 to 184 (NSVASGASSNL) are enriched in polar residues. The segment covering 329–345 (EGTSTSSYEPPTYSSPG) has biased composition (low complexity). A DNA-binding region (homeobox) is located at residues 387-446 (VRKKRKPYSKFQTLELEKEFLFNAYVSKQKRWELARNLQLTERQVKIWFQNRRMKNKKNS). Low complexity predominate over residues 447-475 (QRQANQQNNNNNSSSNHNHAQATQQHHSG).

The protein belongs to the Abd-B homeobox family. In terms of tissue distribution, isoform M and isoform R are expressed in ectodermal and mesodermal tissues and central nervous system of fourth to ninth embryonic abdominal segments. Later in embryogenesis, expression is seen in visceral mesoderm surrounding hindgut and in two Malpighian tubules.

Its subcellular location is the nucleus. Functionally, sequence-specific transcription factor which is part of a developmental regulatory system that provides cells with specific positional identities on the anterior-posterior axis. The chain is Homeobox protein abdominal-B (Abd-B) from Drosophila melanogaster (Fruit fly).